A 617-amino-acid chain; its full sequence is D-glucuronyl C5-epimerase (617 aa).

At 1–11 (MRCLAARVNYK) the chain is on the cytoplasmic side. Residues 12–28 (TLIIICALFTLVTVLLW) traverse the membrane as a helical; Signal-anchor for type II membrane protein segment. The Lumenal portion of the chain corresponds to 29–617 (NKCSSDKAIQ…YLKGSRAKHN (589 aa)). Residues Tyr-179, 184–186 (RDR), Gln-201, Tyr-209, Gln-212, and Gln-215 contribute to the substrate site. Positions 237, 239, 268, 269, and 392 each coordinate Ca(2+). Substrate-binding positions include 429-432 (KLGE), 499-500 (EY), Asn-510, Tyr-514, Tyr-560, Arg-563, and 572-581 (NLARWDYHTT).

The protein belongs to the D-glucuronyl C5-epimerase family. In terms of assembly, homodimer. Interacts with HS2ST1.

The protein localises to the golgi apparatus membrane. It carries out the reaction [heparosan-N-sulfate](n) = [heparan-N-sulfate](n). It functions in the pathway glycan metabolism; heparan sulfate biosynthesis. Its pathway is glycan metabolism; heparin biosynthesis. Functionally, converts D-glucuronic acid residues adjacent to N-sulfate sugar residues to L-iduronic acid residues, both in maturing heparan sulfate (HS) and heparin chains. This is important for further modifications that determine the specificity of interactions between these glycosaminoglycans and proteins. The sequence is that of D-glucuronyl C5-epimerase (GLCE) from Bos taurus (Bovine).